Here is a 349-residue protein sequence, read N- to C-terminus: MNQIIDHIAVIGGGAWGTALAQTSRRAGRRVTLWAREPEVARAINATHENPDFLPGVSLDPGLHATADLAEALRGAEAVLVVCPAQALRPVLTTARPLWPGRAPMVICAKGVEQGSGARMSEVATAVLPEAPLAVLSGPTFAREVAEGRPTAVTLACADGALAEALVLALGTRTFRPYASTDVVGAEIGGAVKNVLAIACGVVEGLGLGDNARAALLTRGLAEITRLGRALGARSETLSGLSGLGDLILTATSMQSRNFSLGFALGQGRTLDQVLGERRSVAEGVHTASAVVALAARWAIEMPICAAIHGVLSGDYDVTSAIESLLSRPLRVEGGSESQIHPTAKTATP.

The NADPH site is built by W16, R36, and K110. Residues K110, G138, and T140 each coordinate sn-glycerol 3-phosphate. Position 142 (A142) interacts with NADPH. Sn-glycerol 3-phosphate-binding residues include K193, D246, S256, R257, and N258. K193 functions as the Proton acceptor in the catalytic mechanism. Residue R257 participates in NADPH binding. The NADPH site is built by V281 and E283.

It belongs to the NAD-dependent glycerol-3-phosphate dehydrogenase family.

The protein localises to the cytoplasm. The enzyme catalyses sn-glycerol 3-phosphate + NAD(+) = dihydroxyacetone phosphate + NADH + H(+). The catalysed reaction is sn-glycerol 3-phosphate + NADP(+) = dihydroxyacetone phosphate + NADPH + H(+). It participates in membrane lipid metabolism; glycerophospholipid metabolism. Functionally, catalyzes the reduction of the glycolytic intermediate dihydroxyacetone phosphate (DHAP) to sn-glycerol 3-phosphate (G3P), the key precursor for phospholipid synthesis. In Rhodospirillum rubrum (strain ATCC 11170 / ATH 1.1.1 / DSM 467 / LMG 4362 / NCIMB 8255 / S1), this protein is Glycerol-3-phosphate dehydrogenase [NAD(P)+].